Here is a 78-residue protein sequence, read N- to C-terminus: Short neurotoxin OH-46 (78 aa).

An N-terminal signal peptide occupies residues 1–21; that stretch reads MKNLLLTFLVVTIVCLDLGYT. Intrachain disulfides connect C24–C40, C33–C58, C62–C70, and C71–C76.

Belongs to the three-finger toxin family. Short-chain subfamily. In terms of tissue distribution, expressed by the venom gland.

The protein localises to the secreted. Functionally, this three-finger toxin binds and inhibits the nicotinic acetylcholine receptor (nAChR). This is Short neurotoxin OH-46 from Ophiophagus hannah (King cobra).